Consider the following 607-residue polypeptide: Autophagy-related protein 16-1 (607 aa).

Positions 13-43 (WKRHISEQLRRRDRLQRQAFEEIILQYNKLL) are interaction with ATG5. Residues 78-230 (NDNQLQEMAQ…QKELAEAAKE (153 aa)) are a coiled coil. Serine 139 carries the phosphoserine; by CK2 modification. Residues 207-230 (AENEKDSRRRQARLQKELAEAAKE) are WIPI2-binding. Positions 230–242 (EPLPVEQDDDIEV) are RB1CC1-binding. Serine 269 and serine 287 each carry phosphoserine. The short motif at 296–299 (DNVD) is the Caspase cleavage element. 7 WD repeats span residues 320–359 (AHDG…CEFK), 364–403 (GSNA…LRHT), 406–445 (GHSG…CIKT), 447–484 (FAGS…IVRE), 486–525 (ELLG…IKQT), 532–573 (KCGS…KVLS), and 575–607 (QHSS…WAQY).

Belongs to the WD repeat ATG16 family. As to quaternary structure, homodimer. Homooligomer. Heterooligomer with ATG16L2. Interacts with WIPI1. Interacts with WIPI2. Interacts with RB1CC1; the interaction is required for ULK1 complex-dependent autophagy. Interacts with ATG5. Part of the minor complex composed of 4 sets of ATG12-ATG5 and ATG16L1 (400 kDa); this complex interacts with ATG3 leading to disruption of ATG7 interaction and promotion of ATG8-like proteins lipidation. Part of the major complex composed of 8 sets of ATG12-ATG5 and ATG16L1 (800 kDa). Interacts with RAB33B (GTP- and GDP-bound forms); the complex consists of a tetramer where two RAB33B molecules bind independently one molecule of the ATG16L1 homodimer; the interaction promotes ATG12-ATG5-ATG16L1 complex recruitment to phagophores. Interacts (via WD repeats) with TMEM59; the interaction mediates unconventional autophagic activity of TMEM59. Interacts with TLR2. Interacts (via WD repeats) with MEFV. Interacts with PPP1CA; the interaction dephosphorylates ATG16L1 causing dissociation of ATG12-ATG5-ATG16L1 complex. Interacts (via N-terminal) with CLTC. Interacts with NOD1. Interacts with NOD2. Interacts with TUFM. Interacts with TRIM16. Interacts (via WD repeats) with SPATA33. Interacts with IRGM. Proteolytic cleavage by activated CASP3 leads to degradation and may regulate autophagy upon cellular stress and apoptotic stimuli. Post-translationally, phosphorylation at Ser-139 promotes association with the ATG12-ATG5 conjugate to form the ATG12-ATG5-ATG16L1 complex.

It localises to the cytoplasm. The protein resides in the preautophagosomal structure membrane. The protein localises to the endosome membrane. It is found in the lysosome membrane. Plays an essential role in both canonical and non-canonical autophagy: interacts with ATG12-ATG5 to mediate the lipidation to ATG8 family proteins (MAP1LC3A, MAP1LC3B, MAP1LC3C, GABARAPL1, GABARAPL2 and GABARAP). Acts as a molecular hub, coordinating autophagy pathways via distinct domains that support either canonical or non-canonical signaling. During canonical autophagy, interacts with ATG12-ATG5 to mediate the conjugation of phosphatidylethanolamine (PE) to ATG8 proteins, to produce a membrane-bound activated form of ATG8. Thereby, controls the elongation of the nascent autophagosomal membrane. As part of the ATG8 conjugation system with ATG5 and ATG12, required for recruitment of LRRK2 to stressed lysosomes and induction of LRRK2 kinase activity in response to lysosomal stress. Also involved in non-canonical autophagy, a parallel pathway involving conjugation of ATG8 proteins to single membranes at endolysosomal compartments, probably by catalyzing conjugation of phosphatidylserine (PS) to ATG8. Non-canonical autophagy plays a key role in epithelial cells to limit lethal infection by influenza A (IAV) virus. Regulates mitochondrial antiviral signaling (MAVS)-dependent type I interferon (IFN-I) production. Negatively regulates NOD1- and NOD2-driven inflammatory cytokine response. Instead, promotes an autophagy-dependent antibacterial pathway together with NOD1 or NOD2. Plays a role in regulating morphology and function of Paneth cell. This is Autophagy-related protein 16-1 from Homo sapiens (Human).